The following is a 304-amino-acid chain: 33 kDa chaperonin (304 aa).

Cystine bridges form between Cys-245–Cys-247 and Cys-278–Cys-281.

It belongs to the HSP33 family. Under oxidizing conditions two disulfide bonds are formed involving the reactive cysteines. Under reducing conditions zinc is bound to the reactive cysteines and the protein is inactive.

Its subcellular location is the cytoplasm. Redox regulated molecular chaperone. Protects both thermally unfolding and oxidatively damaged proteins from irreversible aggregation. Plays an important role in the bacterial defense system toward oxidative stress. This Microcystis aeruginosa (strain NIES-843 / IAM M-2473) protein is 33 kDa chaperonin.